The chain runs to 251 residues: tRNA (guanine-N(7)-)-methyltransferase (251 aa).

The segment at M1–V29 is disordered. 4 residues coordinate S-adenosyl-L-methionine: E84, E109, D136, and D159. The active site involves D159. K163 is a binding site for substrate. The segment at R165–R170 is interaction with RNA. Residues D195 and T230 to E233 each bind substrate.

It belongs to the class I-like SAM-binding methyltransferase superfamily. TrmB family.

The catalysed reaction is guanosine(46) in tRNA + S-adenosyl-L-methionine = N(7)-methylguanosine(46) in tRNA + S-adenosyl-L-homocysteine. It functions in the pathway tRNA modification; N(7)-methylguanine-tRNA biosynthesis. In terms of biological role, catalyzes the formation of N(7)-methylguanine at position 46 (m7G46) in tRNA. The sequence is that of tRNA (guanine-N(7)-)-methyltransferase from Acidovorax sp. (strain JS42).